A 493-amino-acid polypeptide reads, in one-letter code: Flagellin (493 aa).

It belongs to the bacterial flagellin family.

The protein localises to the secreted. The protein resides in the bacterial flagellum. Its function is as follows. Flagellin is the subunit protein which polymerizes to form the filaments of bacterial flagella. This chain is Flagellin (fliC), found in Salmonella rubislaw.